Consider the following 431-residue polypeptide: Serine--tRNA ligase (431 aa).

235-237 (TAE) contributes to the L-serine binding site. ATP is bound by residues 266-268 (RRE) and V282. E289 lines the L-serine pocket. 353–356 (EASS) serves as a coordination point for ATP. S389 is an L-serine binding site.

The protein belongs to the class-II aminoacyl-tRNA synthetase family. Type-1 seryl-tRNA synthetase subfamily. In terms of assembly, homodimer. The tRNA molecule binds across the dimer.

The protein localises to the cytoplasm. It catalyses the reaction tRNA(Ser) + L-serine + ATP = L-seryl-tRNA(Ser) + AMP + diphosphate + H(+). It carries out the reaction tRNA(Sec) + L-serine + ATP = L-seryl-tRNA(Sec) + AMP + diphosphate + H(+). Its pathway is aminoacyl-tRNA biosynthesis; selenocysteinyl-tRNA(Sec) biosynthesis; L-seryl-tRNA(Sec) from L-serine and tRNA(Sec): step 1/1. Catalyzes the attachment of serine to tRNA(Ser). Is also able to aminoacylate tRNA(Sec) with serine, to form the misacylated tRNA L-seryl-tRNA(Sec), which will be further converted into selenocysteinyl-tRNA(Sec). This is Serine--tRNA ligase from Prosthecochloris aestuarii (strain DSM 271 / SK 413).